The following is a 361-amino-acid chain: Mitochondrial fission regulator 2 (361 aa).

A Phosphoserine modification is found at S137. Disordered stretches follow at residues 191 to 286 and 298 to 322; these read FIDL…VPNM and LRPV…EWDP. A compositionally biased stretch (pro residues) spans 219 to 231; the sequence is VLPPPPPPPPPPQ. Residues 232 to 244 are compositionally biased toward low complexity; that stretch reads FSLQPPSSLPMQP. The span at 250 to 282 shows a compositional bias: basic and acidic residues; that stretch reads HDIDSLATEMERQLSGVKKTDDSHHSKSQRLRD. S304 and S340 each carry phosphoserine.

Belongs to the MTFR1 family. Expressed predominantly in testis (at protein level). Expressed to a lower extent in spleen.

It is found in the mitochondrion. May play a role in mitochondrial aerobic respiration essentially in the testis. Can also promote mitochondrial fission. The polypeptide is Mitochondrial fission regulator 2 (Mtfr2) (Mus musculus (Mouse)).